We begin with the raw amino-acid sequence, 345 residues long: Nuclear distribution protein nudE-like 1-A (345 aa).

The stretch at 19–190 (WRELSKRLKQ…LAVRERQTDG (172 aa)) forms a coiled coil. Residues 182-192 (AVRERQTDGTR) are compositionally biased toward basic and acidic residues. Disordered stretches follow at residues 182 to 206 (AVRE…CDKT) and 326 to 345 (PPGV…PLSV). The span at 334-345 (PPSPPGMLPLSV) shows a compositional bias: pro residues.

Belongs to the nudE family. Phosphorylated in mitosis.

The protein resides in the cytoplasm. The protein localises to the cytoskeleton. It is found in the microtubule organizing center. It localises to the centrosome. Its subcellular location is the spindle. Required for organization of the cellular microtubule array and microtubule anchoring at the centrosome. Positively regulates the activity of the minus-end directed microtubule motor protein dynein. May enhance dynein-mediated microtubule sliding by targeting dynein to the microtubule plus end. Positively regulates lysosome peripheral distribution and ruffled border formation in osteoclasts. This Xenopus laevis (African clawed frog) protein is Nuclear distribution protein nudE-like 1-A (ndel1-a).